A 25-amino-acid chain; its full sequence is Ocellatin-F1 (25 aa).

At Leu25 the chain carries Leucine amide.

This sequence belongs to the frog skin active peptide (FSAP) family. Ocellatin subfamily. In terms of tissue distribution, expressed by the skin glands.

It localises to the secreted. Antibacterial peptide that inhibits reference strains of both Gram-negative bacteria (E.coli, P.aeruginosa, E.cloacae, K.pneumoniae, and A.actinomycetemcomitans) and Gram-positive bacteria (S.aureus) with relatively low potencies (MIC=25-400 uM). Shows antifungal activity against C.lusitaniae (MIC=50.25 uM), but no activity against C.albicans. In the presence of an alkaloid (bufotenine), inhibits cellular infection by the rabies virus. The peptide shows very low hemolytic activity against rabbit erythrocytes. The low amphipathicity of alpha-helices demonstrated by wheel projection as well as the low cationicity may explain the low antibacterial and hemolytic potencies. In Leptodactylus labyrinthicus (Labyrinth frog), this protein is Ocellatin-F1.